Here is a 249-residue protein sequence, read N- to C-terminus: tRNA (guanine-N(1)-)-methyltransferase (249 aa).

S-adenosyl-L-methionine contacts are provided by residues Gly-113 and 133-138 (IGDFVV).

It belongs to the RNA methyltransferase TrmD family. As to quaternary structure, homodimer.

It localises to the cytoplasm. The catalysed reaction is guanosine(37) in tRNA + S-adenosyl-L-methionine = N(1)-methylguanosine(37) in tRNA + S-adenosyl-L-homocysteine + H(+). Specifically methylates guanosine-37 in various tRNAs. In Neisseria meningitidis serogroup C (strain 053442), this protein is tRNA (guanine-N(1)-)-methyltransferase.